We begin with the raw amino-acid sequence, 433 residues long: Glutamate-1-semialdehyde 2,1-aminomutase (433 aa).

The residue at position 271 (K271) is an N6-(pyridoxal phosphate)lysine.

The protein belongs to the class-III pyridoxal-phosphate-dependent aminotransferase family. HemL subfamily. As to quaternary structure, homodimer. The cofactor is pyridoxal 5'-phosphate.

Its subcellular location is the cytoplasm. The catalysed reaction is (S)-4-amino-5-oxopentanoate = 5-aminolevulinate. It functions in the pathway porphyrin-containing compound metabolism; protoporphyrin-IX biosynthesis; 5-aminolevulinate from L-glutamyl-tRNA(Glu): step 2/2. The protein operates within porphyrin-containing compound metabolism; chlorophyll biosynthesis. The chain is Glutamate-1-semialdehyde 2,1-aminomutase from Prochlorococcus marinus (strain MIT 9301).